The primary structure comprises 71 residues: uncharacterized protein (71 aa).

The chain crosses the membrane as a helical span at residues 12 to 34 (GYLSLTLVTLPVCSSLHCYFLWT).

It localises to the membrane. This is an uncharacterized protein from Dictyostelium discoideum (Social amoeba).